Reading from the N-terminus, the 940-residue chain is Isoleucine--tRNA ligase (940 aa).

The short motif at 58–68 is the 'HIGH' region element; that stretch reads PYANGAIHIGH. An L-isoleucyl-5'-AMP-binding site is contributed by Glu-564. Residues 605–609 carry the 'KMSKS' region motif; sequence KMSKS. Lys-608 is an ATP binding site. Residues Cys-903, Cys-906, Cys-923, and Cys-926 each contribute to the Zn(2+) site.

It belongs to the class-I aminoacyl-tRNA synthetase family. IleS type 1 subfamily. As to quaternary structure, monomer. It depends on Zn(2+) as a cofactor.

Its subcellular location is the cytoplasm. The catalysed reaction is tRNA(Ile) + L-isoleucine + ATP = L-isoleucyl-tRNA(Ile) + AMP + diphosphate. Its function is as follows. Catalyzes the attachment of isoleucine to tRNA(Ile). As IleRS can inadvertently accommodate and process structurally similar amino acids such as valine, to avoid such errors it has two additional distinct tRNA(Ile)-dependent editing activities. One activity is designated as 'pretransfer' editing and involves the hydrolysis of activated Val-AMP. The other activity is designated 'posttransfer' editing and involves deacylation of mischarged Val-tRNA(Ile). The protein is Isoleucine--tRNA ligase of Nitrosococcus oceani (strain ATCC 19707 / BCRC 17464 / JCM 30415 / NCIMB 11848 / C-107).